The primary structure comprises 693 residues: tRNA (guanine(37)-N(1))-methyltransferase (693 aa).

S-adenosyl-L-methionine contacts are provided by residues Arg327, 365–366 (DI), and 392–393 (DA). Residues 497–572 (AGDSHQSNSH…QKAEDAPTNE (76 aa)) are disordered. The segment covering 500 to 512 (SHQSNSHQSNPHE) has biased composition (low complexity). Asn591 contacts S-adenosyl-L-methionine.

Belongs to the class I-like SAM-binding methyltransferase superfamily. TRM5/TYW2 family. In terms of assembly, monomer.

Its subcellular location is the mitochondrion matrix. It is found in the nucleus. The protein resides in the cytoplasm. It catalyses the reaction guanosine(37) in tRNA + S-adenosyl-L-methionine = N(1)-methylguanosine(37) in tRNA + S-adenosyl-L-homocysteine + H(+). Specifically methylates the N1 position of guanosine-37 in various cytoplasmic and mitochondrial tRNAs. Methylation is not dependent on the nature of the nucleoside 5' of the target nucleoside. This is the first step in the biosynthesis of wybutosine (yW), a modified base adjacent to the anticodon of tRNAs and required for accurate decoding. This chain is tRNA (guanine(37)-N(1))-methyltransferase, found in Plasmodium vivax (strain Salvador I).